A 271-amino-acid chain; its full sequence is 3-methyl-2-oxobutanoate hydroxymethyltransferase (271 aa).

Residues Asp49 and Asp88 each contribute to the Mg(2+) site. 3-methyl-2-oxobutanoate contacts are provided by residues 49-50, Asp88, and Lys118; that span reads DS. Position 120 (Glu120) interacts with Mg(2+). The active-site Proton acceptor is the Glu187.

Belongs to the PanB family. In terms of assembly, homodecamer; pentamer of dimers. The cofactor is Mg(2+).

It is found in the cytoplasm. The catalysed reaction is 3-methyl-2-oxobutanoate + (6R)-5,10-methylene-5,6,7,8-tetrahydrofolate + H2O = 2-dehydropantoate + (6S)-5,6,7,8-tetrahydrofolate. The protein operates within cofactor biosynthesis; (R)-pantothenate biosynthesis; (R)-pantoate from 3-methyl-2-oxobutanoate: step 1/2. In terms of biological role, catalyzes the reversible reaction in which hydroxymethyl group from 5,10-methylenetetrahydrofolate is transferred onto alpha-ketoisovalerate to form ketopantoate. The chain is 3-methyl-2-oxobutanoate hydroxymethyltransferase from Bartonella bacilliformis (strain ATCC 35685 / KC583 / Herrer 020/F12,63).